Here is a 114-residue protein sequence, read N- to C-terminus: MRFLNNKHREKGLKAEEEACGFLKSLGFEMVERNFFSQFGEIDIIALKKGVLHFIEVKSGENFDPIYAITPSKLKKMIKTIRCYLSQKDPNSDFCIDALIVKNGKFELLENITF.

This sequence belongs to the UPF0102 family.

In Helicobacter pylori (strain ATCC 700392 / 26695) (Campylobacter pylori), this protein is UPF0102 protein HP_0823.